The following is a 1051-amino-acid chain: Protein ALWAYS EARLY 2 (1051 aa).

2 stretches are compositionally biased toward basic residues: residues 1–11 (MAPVRKSRSVN) and 27–36 (SKKNKLRKKL). The segment at 1–37 (MAPVRKSRSVNKRFTNETSPRKDAGKSKKNKLRKKLS) is disordered. One can recognise an SANT domain in the interval 39–93 (KLGPQWTRLELERFYDAYRKHGQEWRRVAAAIRNSRSVDMVEALFNMNRAYLSLP). Disordered stretches follow at residues 114-158 (EGSG…IGSP), 170-210 (ANGT…RKQF), 225-293 (TDAS…KDTT), 323-375 (AECN…TSGA), 397-605 (SELS…SSRS), and 948-981 (SIEH…NAQM). Basic and acidic residues predominate over residues 120 to 130 (GEGHDASEVPR). The segment covering 131 to 140 (KQQKRKRAKP) has biased composition (basic residues). A compositionally biased stretch (basic and acidic residues) spans 279-293 (ESSRERKLDSDKDTT). Positions 323 to 332 (AECNDSDDNG) are enriched in acidic residues. 2 stretches are compositionally biased toward basic and acidic residues: residues 350 to 372 (AAIE…DKHT) and 403 to 417 (LKEE…EKSS). Polar residues predominate over residues 560–574 (KQVSDSGPTSLSQKP). The segment covering 586 to 597 (LQEKAKSSETTH) has biased composition (basic and acidic residues). Polar residues predominate over residues 967–981 (NDLNSQDGSEKNAQM).

As to quaternary structure, interacts with SNL1 (via PAH3). In terms of tissue distribution, expressed ubiquitously in vegetative and reproductive tissues.

It is found in the nucleus. The sequence is that of Protein ALWAYS EARLY 2 (ALY2) from Arabidopsis thaliana (Mouse-ear cress).